Reading from the N-terminus, the 154-residue chain is RxLR effector protein PITG_12737 (154 aa).

The N-terminal stretch at 1-16 is a signal peptide; the sequence is MRVYFILILAVATVSG. Positions 42 to 58 match the RxLR-dEER motif; that stretch reads RLLRAELTTDETYPEER.

The protein belongs to the RxLR effector family.

Its subcellular location is the secreted. The protein localises to the host nucleus. It localises to the host cytoplasm. Its function is as follows. Effector that enhances P.infestans colonization of Nicotiana benthamiana leaves. The chain is RxLR effector protein PITG_12737 from Phytophthora infestans (strain T30-4) (Potato late blight agent).